Consider the following 205-residue polypeptide: uncharacterized protein (205 aa).

The next 5 membrane-spanning stretches (helical) occupy residues 4-24, 105-125, 130-150, 151-171, and 182-202; these read LAFL…AIDD, KWFI…LWIL, FLLF…KIPN, WLFN…VPEC, and ITIP…KFII.

The protein localises to the cell membrane. This is an uncharacterized protein from Methanocaldococcus jannaschii (strain ATCC 43067 / DSM 2661 / JAL-1 / JCM 10045 / NBRC 100440) (Methanococcus jannaschii).